Reading from the N-terminus, the 454-residue chain is Putative F-box/LRR-repeat protein At3g58880 (454 aa).

An F-box domain is found at 2 to 48 (VDLVSSLPDDLLGHILSLLTTKEAALTSILSKRWRYLIAFVPYLEFD). LRR repeat units lie at residues 77-102 (LALH…DLLN), 144-168 (SGCR…TLDS), 169-194 (VSWS…NLAN), 214-240 (IKSV…NYTA), 270-301 (LVSV…YLSP), 303-327 (TLQV…VIES), and 328-353 (SMDI…VIKG).

This chain is Putative F-box/LRR-repeat protein At3g58880, found in Arabidopsis thaliana (Mouse-ear cress).